The following is a 216-amino-acid chain: Transmembrane emp24 domain-containing protein eca (216 aa).

Residues 1–20 (MRDQFISLALILCVLHSACG) form the signal peptide. Over 21–182 (LYFHISETER…FRHTSESTNS (162 aa)) the chain is Lumenal. In terms of domain architecture, GOLD spans 30-126 (RKCFIEEVPD…QLRVHLDIQV (97 aa)). Residues 134–164 (ANVAQKEKLTELQLRIRQLLDQVEQITKEQN) adopt a coiled-coil conformation. Residues 183-203 (RVLWWSLAQTVVLVCMGFWQM) form a helical membrane-spanning segment. Topologically, residues 204-216 (RHLKSFFEAKKLV) are cytoplasmic. A Prevents secretion from ER motif is present at residues 213-216 (KKLV).

This sequence belongs to the EMP24/GP25L family.

Its subcellular location is the endoplasmic reticulum membrane. Functionally, eca and bai are essential, though not redundant, for dorsoventral patterning of the embryo. Specifically required during early embryogenesis for the activity of maternal tkv, while the zygotic tkv is not affected. Involved in Golgi organization. The polypeptide is Transmembrane emp24 domain-containing protein eca (Drosophila simulans (Fruit fly)).